The following is a 374-amino-acid chain: 3-isopropylmalate dehydrogenase (374 aa).

An NAD(+)-binding site is contributed by 83–96 (GPKWDNLPPEIRPE). 4 residues coordinate substrate: R104, R114, R142, and D231. Residues D231, D255, and D259 each contribute to the Mg(2+) site. Residue 288-300 (GSAPDIAGQNKAN) coordinates NAD(+).

The protein belongs to the isocitrate and isopropylmalate dehydrogenases family. LeuB type 1 subfamily. As to quaternary structure, homodimer. Requires Mg(2+) as cofactor. The cofactor is Mn(2+).

It is found in the cytoplasm. It catalyses the reaction (2R,3S)-3-isopropylmalate + NAD(+) = 4-methyl-2-oxopentanoate + CO2 + NADH. It functions in the pathway amino-acid biosynthesis; L-leucine biosynthesis; L-leucine from 3-methyl-2-oxobutanoate: step 3/4. Its function is as follows. Catalyzes the oxidation of 3-carboxy-2-hydroxy-4-methylpentanoate (3-isopropylmalate) to 3-carboxy-4-methyl-2-oxopentanoate. The product decarboxylates to 4-methyl-2 oxopentanoate. This Carboxydothermus hydrogenoformans (strain ATCC BAA-161 / DSM 6008 / Z-2901) protein is 3-isopropylmalate dehydrogenase.